We begin with the raw amino-acid sequence, 354 residues long: 5,10-methenyltetrahydromethanopterin hydrogenase (354 aa).

The protein belongs to the HMD family.

The enzyme catalyses 5,10-methenyl-5,6,7,8-tetrahydromethanopterin + H2 = 5,10-methylenetetrahydromethanopterin + H(+). The protein operates within one-carbon metabolism; methanogenesis from CO(2); 5,10-methylene-5,6,7,8-tetrahydromethanopterin from 5,10-methenyl-5,6,7,8-tetrahydromethanopterin (hydrogen route): step 1/1. Its function is as follows. Catalyzes the reversible reduction of methenyl-H(4)MPT(+) to methylene-H(4)MPT. The chain is 5,10-methenyltetrahydromethanopterin hydrogenase from Methanococcus vannielii (strain ATCC 35089 / DSM 1224 / JCM 13029 / OCM 148 / SB).